A 366-amino-acid chain; its full sequence is Isocitrate dehydrogenase [NAD] subunit alpha, mitochondrial (366 aa).

The N-terminal 27 residues, Met-1–Phe-27, are a transit peptide targeting the mitochondrion. The residue at position 77 (Lys-77) is an N6-succinyllysine. Position 101 is a phosphothreonine (Thr-101). Substrate contacts are provided by Arg-115, Arg-125, and Arg-146. N6-acetyllysine is present on Lys-223. The Mg(2+) site is built by Asp-233, Asp-257, and Asp-261. Lys-343 carries the post-translational modification N6-acetyllysine; alternate. At Lys-343 the chain carries N6-succinyllysine; alternate. Position 350 is an N6-succinyllysine (Lys-350).

The protein belongs to the isocitrate and isopropylmalate dehydrogenases family. As to quaternary structure, heterooligomer of subunits alpha (IDH3A), beta (IDH3B), and gamma (IDH3G) in the apparent ratio of 2:1:1. The heterodimer containing one IDH3A and one IDH3B subunit and the heterodimer containing one IDH3A and one IDH3G subunit assemble into a heterotetramer (which contains two subunits of IDH3A, one of IDH3B and one of IDH3G) and further into the heterooctamer. Mg(2+) serves as cofactor. The cofactor is Mn(2+).

Its subcellular location is the mitochondrion. It carries out the reaction D-threo-isocitrate + NAD(+) = 2-oxoglutarate + CO2 + NADH. With respect to regulation, the heterotetramer and the heterodimer composed of IDH3A and IDH3G subunits can be allosterically activated by citrate (CIT) or/and ADP, and the two activators can act independently or synergistically. The heterodimer composed of IDH3A and IDH3B subunits cannot be allosterically regulated and the allosteric regulation of the heterotetramer is through the IDH3G subunit and not the IDH3B subunit. The IDH3G subunit contains the allosteric site which consists of a CIT-binding site and an ADP-binding site, and the binding of CIT and ADP causes conformational changes at the allosteric site which are transmitted to the active site in the catalytic subunit (IDH3A) through a cascade of conformational changes at the heterodimer interface, leading to stabilization of the isocitrate-binding at the active site and thus activation of the enzyme. ATP can activate the heterotetramer and the heterodimer composed of IDH3A and IDH3G subunits at low concentrations but inhibits their activities at high concentrations, whereas ATP exhibits only inhibitory effect on the heterodimer composed of IDH3A and IDH3B subunits. Its function is as follows. Catalytic subunit of the enzyme which catalyzes the decarboxylation of isocitrate (ICT) into alpha-ketoglutarate. The heterodimer composed of the alpha (IDH3A) and beta (IDH3B) subunits and the heterodimer composed of the alpha (IDH3A) and gamma (IDH3G) subunits, have considerable basal activity but the full activity of the heterotetramer (containing two subunits of IDH3A, one of IDH3B and one of IDH3G) requires the assembly and cooperative function of both heterodimers. The protein is Isocitrate dehydrogenase [NAD] subunit alpha, mitochondrial (IDH3A) of Sus scrofa (Pig).